Here is a 509-residue protein sequence, read N- to C-terminus: Light-independent protochlorophyllide reductase subunit B (509 aa).

Aspartate 36 contacts [4Fe-4S] cluster. Catalysis depends on aspartate 295, which acts as the Proton donor. 430–431 (GM) is a binding site for substrate.

It belongs to the ChlB/BchB/BchZ family. Protochlorophyllide reductase is composed of three subunits; ChlL, ChlN and ChlB. Forms a heterotetramer of two ChlB and two ChlN subunits. [4Fe-4S] cluster serves as cofactor.

It is found in the plastid. It localises to the chloroplast. The catalysed reaction is chlorophyllide a + oxidized 2[4Fe-4S]-[ferredoxin] + 2 ADP + 2 phosphate = protochlorophyllide a + reduced 2[4Fe-4S]-[ferredoxin] + 2 ATP + 2 H2O. It functions in the pathway porphyrin-containing compound metabolism; chlorophyll biosynthesis (light-independent). In terms of biological role, component of the dark-operative protochlorophyllide reductase (DPOR) that uses Mg-ATP and reduced ferredoxin to reduce ring D of protochlorophyllide (Pchlide) to form chlorophyllide a (Chlide). This reaction is light-independent. The NB-protein (ChlN-ChlB) is the catalytic component of the complex. The polypeptide is Light-independent protochlorophyllide reductase subunit B (Mesostigma viride (Green alga)).